The sequence spans 272 residues: NH(3)-dependent NAD(+) synthetase (272 aa).

An ATP-binding site is contributed by 45 to 52; sequence GISGGQDS. Residue Asp-51 participates in Mg(2+) binding. Residue Arg-138 participates in deamido-NAD(+) binding. Thr-158 contributes to the ATP binding site. Position 163 (Glu-163) interacts with Mg(2+). Deamido-NAD(+)-binding residues include Lys-171 and Asp-178. Lys-187 and Thr-209 together coordinate ATP. 258 to 259 serves as a coordination point for deamido-NAD(+); it reads HK.

This sequence belongs to the NAD synthetase family. In terms of assembly, homodimer.

It carries out the reaction deamido-NAD(+) + NH4(+) + ATP = AMP + diphosphate + NAD(+) + H(+). The protein operates within cofactor biosynthesis; NAD(+) biosynthesis; NAD(+) from deamido-NAD(+) (ammonia route): step 1/1. Its function is as follows. Catalyzes the ATP-dependent amidation of deamido-NAD to form NAD. Uses ammonia as a nitrogen source. This is NH(3)-dependent NAD(+) synthetase from Bacillus cereus (strain ATCC 14579 / DSM 31 / CCUG 7414 / JCM 2152 / NBRC 15305 / NCIMB 9373 / NCTC 2599 / NRRL B-3711).